Consider the following 430-residue polypeptide: Dihydroorotase (430 aa).

Residues His-57 and His-59 each coordinate Zn(2+). Substrate contacts are provided by residues 59 to 61 (HLR) and Asn-91. Positions 151, 178, and 231 each coordinate Zn(2+). Asn-277 is a substrate binding site. Asp-304 contributes to the Zn(2+) binding site. Asp-304 is an active-site residue. Substrate is bound by residues His-308 and 322–323 (PG).

Belongs to the metallo-dependent hydrolases superfamily. DHOase family. Class I DHOase subfamily. Zn(2+) serves as cofactor.

It carries out the reaction (S)-dihydroorotate + H2O = N-carbamoyl-L-aspartate + H(+). Its pathway is pyrimidine metabolism; UMP biosynthesis via de novo pathway; (S)-dihydroorotate from bicarbonate: step 3/3. In terms of biological role, catalyzes the reversible cyclization of carbamoyl aspartate to dihydroorotate. The sequence is that of Dihydroorotase from Mycobacterium leprae (strain TN).